The following is a 537-amino-acid chain: Copine-3 (537 aa).

2 consecutive C2 domains span residues methionine 1–leucine 115 and glycine 124–phenylalanine 247. Serine 14 carries the phosphoserine modification. 7 residues coordinate Ca(2+): aspartate 22, aspartate 28, aspartate 81, aspartate 83, aspartate 93, aspartate 154, and aspartate 160. Serine 197 carries the phosphoserine modification. Aspartate 216, aspartate 218, and aspartate 224 together coordinate Ca(2+). Serine 243 is subject to Phosphoserine. A VWFA domain is found at asparagine 291 to glutamine 513.

Belongs to the copine family. In terms of assembly, monomer. Interacts with ERBB2 (preferentially with the tyrosine phosphorylated form); this interaction occurs at the cell membrane and is increased in a growth factor heregulin-dependent manner. Interacts with SHC1; this interaction may mediate the binding of CPNE3 with ERBB2. Interacts with RACK1. It depends on Ca(2+) as a cofactor. Post-translationally, phosphorylated on serine and threonine residues. Expressed in breast and weakly in prostate and ovarian tissues. Expressed in neutrophils (at protein level). Widely expressed. Expressed in the brain. Expressed in neutrophil precursors from the bone marrow and peripheral blood. Expressed in primary breast tumors and ovarian endometrioid adenocarcinoma.

It is found in the nucleus. Its subcellular location is the cytoplasm. The protein localises to the cell membrane. It localises to the cell junction. The protein resides in the focal adhesion. Its function is as follows. Calcium-dependent phospholipid-binding protein that plays a role in ERBB2-mediated tumor cell migration in response to growth factor heregulin stimulation. In Homo sapiens (Human), this protein is Copine-3.